A 295-amino-acid polypeptide reads, in one-letter code: Probable porphobilinogen deaminase (295 aa).

S-(dipyrrolylmethanemethyl)cysteine is present on Cys234.

It belongs to the HMBS family. It depends on dipyrromethane as a cofactor.

The enzyme catalyses 4 porphobilinogen + H2O = hydroxymethylbilane + 4 NH4(+). Its pathway is porphyrin-containing compound metabolism; protoporphyrin-IX biosynthesis; coproporphyrinogen-III from 5-aminolevulinate: step 2/4. In terms of biological role, tetrapolymerization of the monopyrrole PBG into the hydroxymethylbilane pre-uroporphyrinogen in several discrete steps. The polypeptide is Probable porphobilinogen deaminase (hemC) (Thermoplasma acidophilum (strain ATCC 25905 / DSM 1728 / JCM 9062 / NBRC 15155 / AMRC-C165)).